Consider the following 481-residue polypeptide: MSIQVHDTLTAQKRELVPLEPGKLRLYVCGPTVYDYSHLGHARCYVVWDVVVRHLRARGLEVRFVRNFTDVDDKIIQRANERGEDPIALASRFADAFHEDMDALGNLRPDVEPRVSGHIPEIVALIARLVERGFAYAPGNGDVYYAVRKFPEYGRLSKRNLDDLIAGARVEPGEAKRDPLDFALWKAAKPGEPAWESPWGKGRPGWHIECSAMTQKHLGAPIDLHAGGKDLVFPHHTNEIAQSVAATSDGLHAEDFARYWMHNGFVQIDDEKMSKSLGNFFTIRDVLARFDGEALRFFLLGTHYRRDFNFSDQVLAEAERRLSALYETVEKAERLGAGAAPAAEPAFVERARAALDDDFNTPQVLGIVAEAFTEANALADRKGKKSSEEKARLAAFARGARAVGAVLGILDRPPAQALTAIRDRAAARRGIDGGEVERSIAERAAARAAKDFARSDAIRDALLARGVVLMDGPQGTTWKVE.

Position 29 (cysteine 29) interacts with Zn(2+). A 'HIGH' region motif is present at residues 31-41; sequence PTVYDYSHLGH. The Zn(2+) site is built by cysteine 210, histidine 235, and glutamate 239. Residues 272–276 carry the 'KMSKS' region motif; it reads KMSKS. Lysine 275 provides a ligand contact to ATP.

This sequence belongs to the class-I aminoacyl-tRNA synthetase family. As to quaternary structure, monomer. Zn(2+) serves as cofactor.

The protein localises to the cytoplasm. It carries out the reaction tRNA(Cys) + L-cysteine + ATP = L-cysteinyl-tRNA(Cys) + AMP + diphosphate. The polypeptide is Cysteine--tRNA ligase (Anaeromyxobacter dehalogenans (strain 2CP-1 / ATCC BAA-258)).